The primary structure comprises 286 residues: 33 kDa chaperonin (286 aa).

Intrachain disulfides connect cysteine 225/cysteine 227 and cysteine 258/cysteine 261.

The protein belongs to the HSP33 family. Post-translationally, under oxidizing conditions two disulfide bonds are formed involving the reactive cysteines. Under reducing conditions zinc is bound to the reactive cysteines and the protein is inactive.

Its subcellular location is the cytoplasm. Its function is as follows. Redox regulated molecular chaperone. Protects both thermally unfolding and oxidatively damaged proteins from irreversible aggregation. Plays an important role in the bacterial defense system toward oxidative stress. This Shewanella loihica (strain ATCC BAA-1088 / PV-4) protein is 33 kDa chaperonin.